We begin with the raw amino-acid sequence, 643 residues long: MEAVETGERPTFGAWDYGVFALMLLVSTGIGLWVGLARGGQRSAEDFFTGGRRLAALPVGLSLSASFMSAVQVLGVPSEAYRYGLKFLWMCLGQLLNSVLTALLFMPVFYRLGLTSTYEYLEMRFSRAVRLCGTLQYIVATMLYTGIVIYAPALILNQVTGLDIWASLLSTGIICTFYTAVGGMKAVVWTDVFQVVVMLSGFWVVLARGVMLVGGPRQVLTLAQNHSRINLMDFNPDPRSRYTFWTFVVGGTLVWLSMYGVNQAQVQRYVACRTEKQAKLALLINQVGLFLIVSSAACCGIVMFVFYTDCDPLLLGRISAPDQYMPLLVLDIFEDLPGVPGLFLACAYSGTLSTASTSINAMAAVTVEDLIKPRLRSLAPRKLVIISKGLSLIYGSACLTVAALSSLLGGGVLQGSFTVMGVISGPLLGAFILGMFLPACNTPGVLAGLGAGLALSLWVALGATLYPPSEQTMRVLPSSAARCVALSVNASGLLDPALLPANDSSRAPSSGMDASRPALADSFYAISYLYYGALGTLTTVLCGALISCLTGPTKRSTLAPGLLWWDLARQTASVAPKEEVAILDDNLVKGPEELPTGNKKPPGFLPTNEDRLFFLGQKELEGAGSWTPCVGHDGGRDQQETNL.

The Extracellular portion of the chain corresponds to Met-1–Ala-14. Residues Trp-15–Gly-31 traverse the membrane as a helical segment. At Leu-32 to Ala-56 the chain is on the cytoplasmic side. The discontinuously helical transmembrane segment at Leu-57–Ala-80 threads the bilayer. Residues Ser-69, Val-71, and Gln-72 each coordinate Na(+). Residue Val-76 participates in iodide binding. The Extracellular portion of the chain corresponds to Tyr-81 to Gly-84. The chain crosses the membrane as a helical span at residues Leu-85 to Phe-105. Met-90 serves as a coordination point for iodide. The Cytoplasmic portion of the chain corresponds to Met-106 to Arg-130. A helical membrane pass occupies residues Leu-131–Asn-157. Tyr-144 provides a ligand contact to Na(+). Residues Gln-158–Asp-163 lie on the Extracellular side of the membrane. The helical transmembrane segment at Ile-164 to Val-181 threads the bilayer. The Cytoplasmic segment spans residues Gly-182–Trp-189. A helical transmembrane segment spans residues Thr-190–Arg-208. Over Gly-209–Thr-243 the chain is Extracellular. Residues Phe-244–Val-266 form a discontinuously helical membrane-spanning segment. Trp-255 serves as a coordination point for iodide. Met-258 serves as a coordination point for Na(+). At Gln-267–Ala-278 the chain is on the cytoplasmic side. Residues Lys-279–Ile-301 traverse the membrane as a helical segment. Residues Val-302–Asp-335 lie on the Extracellular side of the membrane. Residues Leu-336–Ala-363 form a helical membrane-spanning segment. Residues Ala-364 to Ile-386 are Cytoplasmic-facing. The chain crosses the membrane as a helical span at residues Ser-387–Leu-408. The Extracellular portion of the chain corresponds to Gly-409–Gly-411. The helical transmembrane segment at Val-412–Leu-437 threads the bilayer. An iodide-binding site is contributed by Leu-413. Na(+)-binding residues include Ser-416 and Phe-417. Phe-417 is a binding site for iodide. Over Pro-438–Asn-441 the chain is Cytoplasmic. A helical membrane pass occupies residues Thr-442–Leu-465. Residues Tyr-466–Ala-525 lie on the Extracellular side of the membrane. N-linked (GlcNAc...) asparagine glycosylation is found at Asn-489 and Asn-502. The chain crosses the membrane as a helical span at residues Ile-526–Thr-550. The Cytoplasmic segment spans residues Gly-551–Leu-643. Ser-556 is subject to Phosphoserine; by PKA. Residues Ala-623 to Leu-643 are disordered. The segment covering Asp-633–Leu-643 has biased composition (basic and acidic residues).

It belongs to the sodium:solute symporter (SSF) (TC 2.A.21) family. As to quaternary structure, monomer. Post-translationally, glycosylated. As to expression, expression is primarily in thyroid tissue, but also to a lower extent in mammary gland and ovary. Expression is reduced in tumors.

Its subcellular location is the cell membrane. It localises to the cytoplasm. It carries out the reaction iodide(out) + 2 Na(+)(out) = iodide(in) + 2 Na(+)(in). The catalysed reaction is chlorate(out) + 2 Na(+)(out) = chlorate(in) + 2 Na(+)(in). The enzyme catalyses thiocyanate(out) + 2 Na(+)(out) = thiocyanate(in) + 2 Na(+)(in). It catalyses the reaction nitrate(out) + 2 Na(+)(out) = nitrate(in) + 2 Na(+)(in). It carries out the reaction selenocyanate(out) + 2 Na(+)(out) = selenocyanate(in) + 2 Na(+)(in). Its activity is regulated as follows. Dysidenin and perchlorate inhibit iodide transport activity. Oxyanions inhibit iodide transport activity by blocking the binding sites for iodide and one of the sodium ions. Sodium:iodide symporter that mediates the transport of iodide into the thyroid gland. Can also mediate the transport of chlorate, thiocynate, nitrate and selenocynate. In Homo sapiens (Human), this protein is Sodium/iodide cotransporter (SLC5A5).